The primary structure comprises 162 residues: uncharacterized protein (162 aa).

The N-terminal stretch at Met1 to Ala24 is a signal peptide.

This is an uncharacterized protein from Mycobacterium bovis (strain ATCC BAA-935 / AF2122/97).